Here is a 130-residue protein sequence, read N- to C-terminus: Small ribosomal subunit protein uS9 (130 aa).

Positions 104-130 are disordered; it reads LTRDPRMKERKKYGLKKARRAPQFSKR. Positions 111-130 are enriched in basic residues; sequence KERKKYGLKKARRAPQFSKR.

The protein belongs to the universal ribosomal protein uS9 family.

This Ruminiclostridium cellulolyticum (strain ATCC 35319 / DSM 5812 / JCM 6584 / H10) (Clostridium cellulolyticum) protein is Small ribosomal subunit protein uS9.